The chain runs to 97 residues: Defensin-like protein 246 (97 aa).

An N-terminal signal peptide occupies residues 1–24 (MKFVAIFLVTCVLFSLFPSHLSQG). 4 disulfide bridges follow: cysteine 39/cysteine 96, cysteine 50/cysteine 79, cysteine 58/cysteine 89, and cysteine 77/cysteine 91.

It belongs to the DEFL family. As to expression, flower buds and stems.

It localises to the secreted. This Arabidopsis thaliana (Mouse-ear cress) protein is Defensin-like protein 246 (SCRL5).